The sequence spans 128 residues: V-type proton ATPase subunit F (128 aa).

This sequence belongs to the V-ATPase F subunit family. As to quaternary structure, V-ATPase is a heteromultimeric enzyme composed of a peripheral catalytic V1 complex (components A to H) attached to an integral membrane V0 proton pore complex (components: a, c, c'', d and e).

The protein localises to the vacuole membrane. Subunit of the peripheral V1 complex of vacuolar ATPase essential for assembly or catalytic function. V-ATPase is responsible for acidifying a variety of intracellular compartments in eukaryotic cells. This Arabidopsis thaliana (Mouse-ear cress) protein is V-type proton ATPase subunit F (VHA-F).